The chain runs to 298 residues: Pyruvate synthase subunit PorB (298 aa).

Residues cysteine 19, cysteine 22, cysteine 47, and cysteine 218 each contribute to the [4Fe-4S] cluster site.

In terms of assembly, heterotetramer of one alpha, one beta, one delta and one gamma chain. Requires [4Fe-4S] cluster as cofactor.

It carries out the reaction 2 oxidized [2Fe-2S]-[ferredoxin] + pyruvate + CoA = 2 reduced [2Fe-2S]-[ferredoxin] + acetyl-CoA + CO2 + H(+). The chain is Pyruvate synthase subunit PorB (porB) from Methanocaldococcus jannaschii (strain ATCC 43067 / DSM 2661 / JAL-1 / JCM 10045 / NBRC 100440) (Methanococcus jannaschii).